Consider the following 155-residue polypeptide: Telokin-like protein 20 homolog (155 aa).

The interval 109–155 is disordered; it reads KRAVAPPHHEPEPVPAEEGAVADRAEPESGDAPPSPKKQKLDEREQD.

The protein is Telokin-like protein 20 homolog of Orgyia pseudotsugata multicapsid polyhedrosis virus (OpMNPV).